Consider the following 709-residue polypeptide: Protein white (709 aa).

A disordered region spans residues 1 to 35 (MTINTDDQYADGESKTTISSNRRYSTSSFQDQSME). Residues 15 to 32 (KTTISSNRRYSTSSFQDQ) are compositionally biased toward polar residues. The 246-residue stretch at 103-348 (FTRQRLVKDF…SQLGIPCPPN (246 aa)) folds into the ABC transporter domain. ATP-binding positions include 136-143 (GSSGAGKT) and 292-299 (GMAMKGKT). The helical transmembrane segment at 457 to 475 (LLQTAMVASLIGSIYFGQV) threads the bilayer. The N-linked (GlcNAc...) asparagine glycan is linked to N485. 4 consecutive transmembrane segments (helical) span residues 487–507 (SLFLFLTNMTFQNVFAVINVF), 537–555 (LPLFIAVPFVFTSITYPMI), 564–585 (YLTTLFIVTLVANVSTSFGYLI), and 598–616 (VGPPVVIPFLIFGGFFLNS). N658 carries N-linked (GlcNAc...) asparagine glycosylation. Residues 681–700 (LDIGCLFALIVLFRLGALFC) traverse the membrane as a helical segment.

The protein belongs to the ABC transporter superfamily. ABCG family. Eye pigment precursor importer (TC 3.A.1.204) subfamily.

It localises to the membrane. May be part of a membrane-spanning permease system necessary for the transport of pigment precursors into pigment cells responsible for eye color. The polypeptide is Protein white (W) (Anopheles albimanus (New world malaria mosquito)).